We begin with the raw amino-acid sequence, 270 residues long: 4-hydroxy-tetrahydrodipicolinate reductase (270 aa).

NAD(+) is bound by residues 11–16 (GASGRM) and Glu-37. NADP(+) is bound at residue Arg-38. Residues 101–103 (GTT) and 125–128 (APNM) each bind NAD(+). Residue His-158 is the Proton donor/acceptor of the active site. A (S)-2,3,4,5-tetrahydrodipicolinate-binding site is contributed by His-159. Catalysis depends on Lys-162, which acts as the Proton donor. A (S)-2,3,4,5-tetrahydrodipicolinate-binding site is contributed by 168-169 (GT).

This sequence belongs to the DapB family.

It localises to the cytoplasm. It carries out the reaction (S)-2,3,4,5-tetrahydrodipicolinate + NAD(+) + H2O = (2S,4S)-4-hydroxy-2,3,4,5-tetrahydrodipicolinate + NADH + H(+). The catalysed reaction is (S)-2,3,4,5-tetrahydrodipicolinate + NADP(+) + H2O = (2S,4S)-4-hydroxy-2,3,4,5-tetrahydrodipicolinate + NADPH + H(+). Its pathway is amino-acid biosynthesis; L-lysine biosynthesis via DAP pathway; (S)-tetrahydrodipicolinate from L-aspartate: step 4/4. Its function is as follows. Catalyzes the conversion of 4-hydroxy-tetrahydrodipicolinate (HTPA) to tetrahydrodipicolinate. In Shewanella amazonensis (strain ATCC BAA-1098 / SB2B), this protein is 4-hydroxy-tetrahydrodipicolinate reductase.